Here is a 1003-residue protein sequence, read N- to C-terminus: Phosphatidylinositol 4,5-bisphosphate 5-phosphatase A (1003 aa).

2 disordered regions span residues 1–110 and 147–414; these read MEGQ…AAKS and AMPR…QPTC. The RSXSXX motif 1 signature appears at 6–11; it reads RSGSAR. Over residues 11–24 the composition is skewed to low complexity; sequence RPGTRTGLGPLPGT. Residue R56 is modified to Asymmetric dimethylarginine; alternate. R56 bears the Omega-N-methylarginine; alternate mark. R65 carries the post-translational modification Omega-N-methylarginine. R76 is modified (asymmetric dimethylarginine). R83 is subject to Asymmetric dimethylarginine; alternate. R83 bears the Omega-N-methylarginine; alternate mark. Polar residues predominate over residues 160-174; sequence LTPTSRDQKQLSPTS. S171 is modified (phosphoserine). The segment covering 180-196 has biased composition (low complexity); the sequence is ALATSGLSLALASQEQP. The span at 197–210 shows a compositional bias: pro residues; that stretch reads PQSPSSPSPVPSPV. Positions 284–294 are enriched in basic and acidic residues; sequence ARPEAPRHSPE. Phosphoserine is present on residues S292 and S325. Residues 338–348 are compositionally biased toward pro residues; it reads VPPPLPKPPRS. Residues 346 to 351 carry the SH3-binding motif; that stretch reads PRSPSR. Low complexity-rich tracts occupy residues 349–361 and 390–413; these read PSRS…NRSP and QAQE…AQPT. Positions 351-356 match the RSXSXX motif 2 motif; the sequence is RSPSRS. The catalytic stretch occupies residues 422–725; it reads ITVVTWNVGT…SDHKPVAAQF (304 aa). Positions 726–837 are required for ruffle localization; that stretch reads ILQFAFRDDV…IGVTEPFQIS (112 aa). Residues 839 to 1003 form a disordered region; that stretch reads PTSESASSST…LGLEEGGLGP (165 aa). Over residues 840-855 the composition is skewed to low complexity; the sequence is TSESASSSTDSSGTSS. 2 short sequence motifs (RSXSXX motif) span residues 871–876 and 882–887; these read RSPSPG and RSRSPG. A Phosphoserine modification is found at S900. 2 stretches are compositionally biased toward low complexity: residues 907–919 and 927–943; these read SRSP…QLPR and SSSS…GLPG. The RSXSXX motif 5 motif lies at 908-913; the sequence is RSPSPQ. Phosphoserine is present on S987.

The protein belongs to the inositol 1,4,5-trisphosphate 5-phosphatase type II family.

It is found in the cytoplasm. It catalyses the reaction 1D-myo-inositol 1,4,5-trisphosphate + H2O = 1D-myo-inositol 1,4-bisphosphate + phosphate. The catalysed reaction is 1D-myo-inositol 1,3,4,5-tetrakisphosphate + H2O = 1D-myo-inositol 1,3,4-trisphosphate + phosphate. It carries out the reaction a 1,2-diacyl-sn-glycero-3-phospho-(1D-myo-inositol-4,5-bisphosphate) + H2O = a 1,2-diacyl-sn-glycero-3-phospho-(1D-myo-inositol 4-phosphate) + phosphate. Functionally, inositol 5-phosphatase, which converts inositol 1,4,5-trisphosphate to inositol 1,4-bisphosphate. Also converts phosphatidylinositol 4,5-bisphosphate to phosphatidylinositol 4-phosphate and inositol 1,3,4,5-tetrakisphosphate to inositol 1,3,4-trisphosphate in vitro. May be involved in modulation of the function of inositol and phosphatidylinositol polyphosphate-binding proteins that are present at membranes ruffles. In Mus musculus (Mouse), this protein is Phosphatidylinositol 4,5-bisphosphate 5-phosphatase A (Inpp5j).